The sequence spans 225 residues: Ribonuclease 3 (225 aa).

The region spanning Ile7–Asp129 is the RNase III domain. Position 42 (Glu42) interacts with Mg(2+). Asp46 is a catalytic residue. 2 residues coordinate Mg(2+): Asp115 and Glu118. The active site involves Glu118. The 71-residue stretch at Asp155–Lys225 folds into the DRBM domain.

It belongs to the ribonuclease III family. In terms of assembly, homodimer. The cofactor is Mg(2+).

The protein localises to the cytoplasm. It catalyses the reaction Endonucleolytic cleavage to 5'-phosphomonoester.. In terms of biological role, digests double-stranded RNA. Involved in the processing of primary rRNA transcript to yield the immediate precursors to the large and small rRNAs (23S and 16S). Processes some mRNAs, and tRNAs when they are encoded in the rRNA operon. Processes pre-crRNA and tracrRNA of type II CRISPR loci if present in the organism. The chain is Ribonuclease 3 from Shewanella piezotolerans (strain WP3 / JCM 13877).